We begin with the raw amino-acid sequence, 226 residues long: dITP/XTP pyrophosphatase (226 aa).

14 to 19 (TGNKDK) lines the substrate pocket. Residues E49 and D83 each coordinate Mg(2+). Catalysis depends on D83, which acts as the Proton acceptor. Residues T84, 176 to 179 (FGYD), K199, and 204 to 205 (HR) contribute to the substrate site.

This sequence belongs to the HAM1 NTPase family. Homodimer. It depends on Mg(2+) as a cofactor.

The enzyme catalyses XTP + H2O = XMP + diphosphate + H(+). It carries out the reaction dITP + H2O = dIMP + diphosphate + H(+). It catalyses the reaction ITP + H2O = IMP + diphosphate + H(+). In terms of biological role, pyrophosphatase that catalyzes the hydrolysis of nucleoside triphosphates to their monophosphate derivatives, with a high preference for the non-canonical purine nucleotides XTP (xanthosine triphosphate), dITP (deoxyinosine triphosphate) and ITP. Seems to function as a house-cleaning enzyme that removes non-canonical purine nucleotides from the nucleotide pool, thus preventing their incorporation into DNA/RNA and avoiding chromosomal lesions. This chain is dITP/XTP pyrophosphatase, found in Chlorobaculum tepidum (strain ATCC 49652 / DSM 12025 / NBRC 103806 / TLS) (Chlorobium tepidum).